The chain runs to 251 residues: Triosephosphate isomerase (251 aa).

9–11 (NWK) is a binding site for substrate. Residue histidine 95 is the Electrophile of the active site. The active-site Proton acceptor is the glutamate 167. Residues glycine 173, serine 213, and 234 to 235 (GG) contribute to the substrate site. Serine 213 is modified (phosphoserine).

Belongs to the triosephosphate isomerase family. In terms of assembly, homodimer.

The protein localises to the cytoplasm. It carries out the reaction D-glyceraldehyde 3-phosphate = dihydroxyacetone phosphate. Its pathway is carbohydrate biosynthesis; gluconeogenesis. The protein operates within carbohydrate degradation; glycolysis; D-glyceraldehyde 3-phosphate from glycerone phosphate: step 1/1. Functionally, involved in the gluconeogenesis. Catalyzes stereospecifically the conversion of dihydroxyacetone phosphate (DHAP) to D-glyceraldehyde-3-phosphate (G3P). This Bacillus cytotoxicus (strain DSM 22905 / CIP 110041 / 391-98 / NVH 391-98) protein is Triosephosphate isomerase.